Consider the following 625-residue polypeptide: Thrombopoietin receptor (625 aa).

The N-terminal stretch at 1 to 25 is a signal peptide; the sequence is MPSWALFMVTSCLLLALPNQAQVTS. Topologically, residues 26 to 482 are extracellular; sequence QDVFLLALGT…RVSTGSETAW (457 aa). N-linked (GlcNAc...) asparagine glycosylation occurs at N117. Fibronectin type-III domains follow at residues 178-270 and 383-479; these read NATA…PVTV and PTPS…TGSE. A WSXWS motif motif is present at residues 465–469; the sequence is WSAWS. Residues 483–504 form a helical membrane-spanning segment; that stretch reads ITLVTALLLVLSLSALLGLLLL. The Cytoplasmic portion of the chain corresponds to 505–625; sequence KWQFPAHYRR…YLPLSYWQQP (121 aa). Residues 519–527 carry the Box 1 motif motif; that stretch reads LWPSLPDLH. Residues K544 and K564 each participate in a glycyl lysine isopeptide (Lys-Gly) (interchain with G-Cter in ubiquitin) cross-link. Residues Y616 and Y621 each carry the phosphotyrosine modification.

This sequence belongs to the type I cytokine receptor family. Type 1 subfamily. As to quaternary structure, homodimer. Interacts with ATXN2L. Interacts with JAK2 and TYK2; these interactions increase MPL localization to the cell membrane. Interacts with THPO. Interacts with SHIP/INPP5D. Interacts with kinases BTK and SYK. Post-translationally, ubiquitination at Lys-544 and Lys-564 targets MPL for degradation by both the lysosomal and proteasomal pathways. The E3 ubiquitin-protein ligase CBL significantly contributes to this ubiquitination.

The protein resides in the cell membrane. It localises to the golgi apparatus. The protein localises to the cell surface. Functionally, receptor for thrombopoietin that regulates hematopoietic stem cell renewal, megakaryocyte differentiation, and platelet formation. Upon activation by THPO, induces rapid tyrosine phosphorylation and activation of JAK2, providing docking sites for many signaling proteins such as STAT5, SHIP/INPP5D, GRB2, SOS1 and PI3K. In turn, These signaling cascades lead to the proliferation, survival, and differentiation of megakaryocytes, ultimately leading to increased platelet production. Its function is as follows. Acts as an inhibitor of thrombopoietin signaling by promoting protein down-regulation of full-length isoform Mpl-fl. The protein is Thrombopoietin receptor (Mpl) of Mus musculus (Mouse).